The primary structure comprises 81 residues: Short neurotoxin 2 (81 aa).

A signal peptide spans 1 to 21 (MKTLLLTLVVVTIVCLDLGYT). 4 disulfides stabilise this stretch: Cys-24-Cys-43, Cys-38-Cys-60, Cys-62-Cys-73, and Cys-74-Cys-79.

The protein belongs to the three-finger toxin family. Short-chain subfamily. Type I alpha-neurotoxin sub-subfamily. As to expression, expressed by the venom gland.

It localises to the secreted. Functionally, binds to muscle nicotinic acetylcholine receptor (nAChR) and inhibit acetylcholine from binding to the receptor, thereby impairing neuromuscular transmission. The sequence is that of Short neurotoxin 2 from Hydrophis peronii (Spiny-headed seasnake).